A 159-amino-acid polypeptide reads, in one-letter code: Large ribosomal subunit protein uL30 (159 aa).

It belongs to the universal ribosomal protein uL30 family. Part of the 50S ribosomal subunit.

This is Large ribosomal subunit protein uL30 from Aeropyrum pernix (strain ATCC 700893 / DSM 11879 / JCM 9820 / NBRC 100138 / K1).